A 138-amino-acid polypeptide reads, in one-letter code: ATP synthase epsilon chain (138 aa).

It belongs to the ATPase epsilon chain family. As to quaternary structure, F-type ATPases have 2 components, CF(1) - the catalytic core - and CF(0) - the membrane proton channel. CF(1) has five subunits: alpha(3), beta(3), gamma(1), delta(1), epsilon(1). CF(0) has three main subunits: a, b and c.

The protein resides in the cell inner membrane. Produces ATP from ADP in the presence of a proton gradient across the membrane. In Trichlorobacter lovleyi (strain ATCC BAA-1151 / DSM 17278 / SZ) (Geobacter lovleyi), this protein is ATP synthase epsilon chain.